Here is a 273-residue protein sequence, read N- to C-terminus: Large ribosomal subunit protein uL2 (273 aa).

2 disordered regions span residues lysine 28–histidine 53 and arginine 221–lysine 273. The segment covering lysine 39–arginine 48 has biased composition (low complexity).

It belongs to the universal ribosomal protein uL2 family. As to quaternary structure, part of the 50S ribosomal subunit. Forms a bridge to the 30S subunit in the 70S ribosome.

Functionally, one of the primary rRNA binding proteins. Required for association of the 30S and 50S subunits to form the 70S ribosome, for tRNA binding and peptide bond formation. It has been suggested to have peptidyltransferase activity; this is somewhat controversial. Makes several contacts with the 16S rRNA in the 70S ribosome. This Klebsiella pneumoniae (strain 342) protein is Large ribosomal subunit protein uL2.